The primary structure comprises 137 residues: Glutamate mutase sigma subunit (137 aa).

Positions 3–137 (EVNLVLGVIG…KALKEDLGLM (135 aa)) constitute a B12-binding domain. Residues 13–17 (ADVHA), His16, 61–63 (SSL), and 93–97 (NLVVG) each bind adenosylcob(III)alamin.

This sequence belongs to the methylaspartate mutase GlmS subunit family. As to quaternary structure, heterotetramer composed of 2 epsilon subunits (GlmE) and 2 sigma subunits (GlmS). GlmE exists as a homodimer and GlmS as a monomer. Adenosylcob(III)alamin is required as a cofactor.

It carries out the reaction (2S,3S)-3-methyl-L-aspartate = L-glutamate. It functions in the pathway amino-acid degradation; L-glutamate degradation via mesaconate pathway; acetate and pyruvate from L-glutamate: step 1/4. In terms of biological role, catalyzes the carbon skeleton rearrangement of L-glutamate to L-threo-3-methylaspartate ((2S,3S)-3-methylaspartate). The protein is Glutamate mutase sigma subunit of Carboxydothermus hydrogenoformans (strain ATCC BAA-161 / DSM 6008 / Z-2901).